A 467-amino-acid chain; its full sequence is MEPGTNSFQVEFPDFSSTILQKLNQQRQQGQLCDVSIVVQGHIFQAHKAVLAASSPYFCDQVLLKNSRRIVLPDVMNPRVFENILLFSYTGRLVMPAPEIVSYLTAASFLQMWHVVDKCTEVLEGNPTVLCQKLNHGSDHQSPSSSNYNGLVESFELGSGGHTDFPKAQELRDGENEEESTKDELSSQVTEHEYLPSNSSTEHDRLSTEMASQDGEEGTNDSTEFHYTRPLYSKPSIMAHRRWIHVKPERLEQAWDGMDVHAAYDEHQVTESVNTMQTDHSAQPSGAEEEFQIVEKKVEVEFDEQAEGSSYDEQVDFYGSSMEEFSGEKLGGNLIGHKQEAALAAGYSENIEMAMGIKEEASHLGFSATDKLYPCQCGKSFTHKSQRDRHMSMHLGLRPYGCSVCGKKFKMKHHLVGHMKIHTGIKPYECNICAKRFMWRDSFHRHVTSCTKSYEAAKAEQNTTEAN.

M1 is subject to N-acetylmethionine. In terms of domain architecture, BTB spans 33–97 (CDVSIVVQGH…SYTGRLVMPA (65 aa)). Disordered regions lie at residues 134–153 (LNHG…GLVE) and 162–227 (HTDF…EFHY). The segment covering 140 to 149 (HQSPSSSNYN) has biased composition (polar residues). Composition is skewed to basic and acidic residues over residues 164–174 (DFPKAQELRDG) and 182–194 (KDEL…EHEY). Glycyl lysine isopeptide (Lys-Gly) (interchain with G-Cter in SUMO2) cross-links involve residues K182, K247, K297, and K358. The C2H2-type 1; atypical zinc-finger motif lies at 373–394 (YPCQCGKSFTHKSQRDRHMSMH). A C2H2-type 2 zinc finger spans residues 400 to 422 (YGCSVCGKKFKMKHHLVGHMKIH). A Phosphothreonine modification is found at T423. The C2H2-type 3; atypical zinc finger occupies 428–450 (YECNICAKRFMWRDSFHRHVTSC). K458 participates in a covalent cross-link: Glycyl lysine isopeptide (Lys-Gly) (interchain with G-Cter in SUMO2).

This sequence belongs to the krueppel C2H2-type zinc-finger protein family. Interacts with BDP1.

It is found in the nucleus. May be involved in transcriptional regulation. The protein is Zinc finger and BTB domain-containing protein 43 (Zbtb43) of Mus musculus (Mouse).